Consider the following 263-residue polypeptide: Taurine import ATP-binding protein TauB (263 aa).

Residues 4-235 form the ABC transporter domain; the sequence is LTAEAISLSF…RYAAGETVRS (232 aa). 40–47 contacts ATP; the sequence is GPSGCGKS.

The protein belongs to the ABC transporter superfamily. Taurine importer (TC 3.A.1.17.1) family. As to quaternary structure, the complex is composed of two ATP-binding proteins (TauB), two transmembrane proteins (TauC) and a solute-binding protein (TauA).

It localises to the cell inner membrane. The catalysed reaction is taurine(out) + ATP + H2O = taurine(in) + ADP + phosphate + H(+). Its function is as follows. Part of the ABC transporter complex TauABC involved in taurine import. Responsible for energy coupling to the transport system. This is Taurine import ATP-binding protein TauB from Pseudomonas aeruginosa (strain ATCC 15692 / DSM 22644 / CIP 104116 / JCM 14847 / LMG 12228 / 1C / PRS 101 / PAO1).